The primary structure comprises 684 residues: MARRKNFKKGNKKTFGARDDSRAQKNWSELVKENEKWEKYYKTLALFPEDQWEEFKKTCQAPLPLTFRITGSRKHAGEVLNLFKERHLPNLTNVEFEGEKIKAPVELPWYPDHLAWQLDVPKTVIRKNEQFAKTQRFLVVENAVGNISRQEAVSMIPPIVLEVKPHHTVLDMCAAPGSKTAQLIEALHKDTDEPSGFVVANDADARRSHMLVHQLKRLNSANLMVVNHDAQFFPRIRLHGNSNNKNDVLKFDRILCDVPCSGDGTMRKNVNVWKDWNTQAGLGLHAVQLNILNRGLHLLKNNGRLVYSTCSLNPIENEAVVAEALRKWGDKIRLVNCDDKLPGLIRSKGVSKWPVYDRNLTEKTKGDEGTLDSFFSPSEEEASKFNLQNCMRVYPHQQNTGGFFITVFEKVEDSTEAATEKLSSETPALESEGPQTKKIKVEEVQKKERLPRDANEEPFVFVDPQHEALKVCWDFYGIDNIFDRNTCLVRNATGEPTRVVYTVCPALKDVIQANDDRLKIIYSGVKLFVSQRSDIECSWRIQSESLPIMKHHMKSNRIVEANLEMLKHLLIESFPNFDDIRSKNIDNDFVEKMTKLSSGCAFIDVSRNDPAKENLFLPVWKGNKCINLMVCKEDTHELLYRIFGIDANAKATPSAEEKEKEKETTESPAETTTGTSTEAPSAAN.

Positions 1 to 12 (MARRKNFKKGNK) are enriched in basic residues. Residues 1-24 (MARRKNFKKGNKKTFGARDDSRAQ) form a disordered region. Residues 173–179 (CAAPGSK), aspartate 202, aspartate 229, and aspartate 257 each bind S-adenosyl-L-methionine. The Nucleophile role is filled by cysteine 310. At threonine 426 the chain carries Phosphothreonine. The residue at position 431 (serine 431) is a Phosphoserine. The tract at residues 650 to 684 (KATPSAEEKEKEKETTESPAETTTGTSTEAPSAAN) is disordered. Positions 655–665 (AEEKEKEKETT) are enriched in basic and acidic residues. A compositionally biased stretch (low complexity) spans 666-684 (ESPAETTTGTSTEAPSAAN). Position 667 is a phosphoserine (serine 667).

It belongs to the class I-like SAM-binding methyltransferase superfamily. RsmB/NOP family. TRM4 subfamily.

It localises to the nucleus. It is found in the nucleolus. It catalyses the reaction cytidine(34) in tRNA precursor + S-adenosyl-L-methionine = 5-methylcytidine(34) in tRNA precursor + S-adenosyl-L-homocysteine + H(+). The enzyme catalyses cytidine(40) in tRNA precursor + S-adenosyl-L-methionine = 5-methylcytidine(40) in tRNA precursor + S-adenosyl-L-homocysteine + H(+). The catalysed reaction is cytidine(48) in tRNA + S-adenosyl-L-methionine = 5-methylcytidine(48) in tRNA + S-adenosyl-L-homocysteine + H(+). It carries out the reaction cytidine(49) in tRNA + S-adenosyl-L-methionine = 5-methylcytidine(49) in tRNA + S-adenosyl-L-homocysteine + H(+). In terms of biological role, methylates cytosine to m5C at several positions in different tRNAs and pre-tRNAs containing intron. Able to modify tRNAs at all four positions (34, 40, 48 and 49) at which m5C has been found in tRNAs. May be involved in ribosome biogenesis as its disruption leads to increased sensitivity to the antibiotic paromomycin. This is Multisite-specific tRNA:(cytosine-C(5))-methyltransferase (NCL1) from Saccharomyces cerevisiae (strain ATCC 204508 / S288c) (Baker's yeast).